The chain runs to 352 residues: MGNQKKIIHIDMDCFYAAIEMRDFPEYQNIPLAVGGDGPRSVLCTSNYQARQFGVRSAMPAIKAKQLCPHLKIVHGRMDVYKETSKNIREIFSRYTDLIEPLSLDEAYLDVTDATMCQGSATLIAERIRADIFNELNLTASAGIAPNKFLAKIASDENKPNGQCVITPDKVANFVEQLSLKKIPGIGPKTFEKLNRHGYVTCADVRQSNIRALQNIVGKFANSLYLKSHGVDNRDLEVSRQRKSLAIETTLAHDISTQDECKLVIDSLYQKLLTRLAPHSNREIIRQGVKLKFTDFNQTTVETQSNECQQALFISLLSKAYSRSNKRGVRLVGLTLGFADSPGESQQLSLSL.

A UmuC domain is found at 7 to 187; the sequence is IIHIDMDCFY…LSLKKIPGIG (181 aa). Positions 11 and 105 each coordinate Mg(2+). Residue Glu-106 is part of the active site.

Belongs to the DNA polymerase type-Y family. In terms of assembly, monomer. Mg(2+) serves as cofactor.

The protein resides in the cytoplasm. The catalysed reaction is DNA(n) + a 2'-deoxyribonucleoside 5'-triphosphate = DNA(n+1) + diphosphate. Functionally, poorly processive, error-prone DNA polymerase involved in untargeted mutagenesis. Copies undamaged DNA at stalled replication forks, which arise in vivo from mismatched or misaligned primer ends. These misaligned primers can be extended by PolIV. Exhibits no 3'-5' exonuclease (proofreading) activity. May be involved in translesional synthesis, in conjunction with the beta clamp from PolIII. This chain is DNA polymerase IV, found in Colwellia psychrerythraea (strain 34H / ATCC BAA-681) (Vibrio psychroerythus).